The sequence spans 145 residues: Large ribosomal subunit protein uL11 (145 aa).

The protein belongs to the universal ribosomal protein uL11 family. In terms of assembly, part of the ribosomal stalk of the 50S ribosomal subunit. Interacts with L10 and the large rRNA to form the base of the stalk. L10 forms an elongated spine to which L12 dimers bind in a sequential fashion forming a multimeric L10(L12)X complex. Post-translationally, one or more lysine residues are methylated.

Its function is as follows. Forms part of the ribosomal stalk which helps the ribosome interact with GTP-bound translation factors. This is Large ribosomal subunit protein uL11 from Rickettsia akari (strain Hartford).